Reading from the N-terminus, the 413-residue chain is MAGLAPEGSQFDARQYDAKMTELLGTEQEEFFTSYDEVYDSFDAMGLQENLLRGIYAYGFEKPSAIQQRGIVPFCKGLDVIQQAQSGTGKTATFCSGVLQQLDYSLVECQALVLAPTRELAQQIEKVMRALGDYLGVKVHACVGGTSVREDQRILQSGVHVVVGTPGRVFDMLRRQSLRPDHIKMFVLDEADEMLSRGFKDQIYDIFQLLPPKIQVGVFSATMPPEALEITRKFMNKPVRILVKRDDVTLEGIKQFYVNVDKEEWKLETLCDLYETLAITQSVIFVNTRRKVDWLTDKMRSRDHTVSATHGDMDQNTRDIIMREFRSGSSRVLITTDLLARGIDVQQVSLVINYDLPTQPENYLHRIGRSGRFGRKGVAINFVTKDDERMLSDIQKFYNVVIEELPANVADLL.

The short motif at 40–68 (DSFDAMGLQENLLRGIYAYGFEKPSAIQQ) is the Q motif element. One can recognise a Helicase ATP-binding domain in the interval 71–241 (IVPFCKGLDV…RKFMNKPVRI (171 aa)). 84–91 (AQSGTGKT) provides a ligand contact to ATP. Residues 189–192 (DEAD) carry the DEAD box motif. The 162-residue stretch at 252-413 (GIKQFYVNVD…ELPANVADLL (162 aa)) folds into the Helicase C-terminal domain.

The protein belongs to the DEAD box helicase family. eIF4A subfamily. EIF4F is a multi-subunit complex, the composition of which varies with external and internal environmental conditions. It is composed of at least EIF4A, EIF4E and EIF4G.

It catalyses the reaction ATP + H2O = ADP + phosphate + H(+). Its function is as follows. ATP-dependent RNA helicase which is a subunit of the eIF4F complex involved in cap recognition and is required for mRNA binding to ribosome. In the current model of translation initiation, eIF4A unwinds RNA secondary structures in the 5'-UTR of mRNAs which is necessary to allow efficient binding of the small ribosomal subunit, and subsequent scanning for the initiator codon. In Nicotiana tabacum (Common tobacco), this protein is Eukaryotic initiation factor 4A-10.